We begin with the raw amino-acid sequence, 924 residues long: MNRRDFIKNTAIASAASVAGLSVPSSMLGAQEEDWKWDKAVCRFCGTGCGIMIARKDGKIVATKGDPAAPVNRGLNCIKGYFNAKIMYGEDRLVMPLLRMNEKGEFDKKGKFQQVSWQRAFDEMEKQFKKAYNELGVTGIGIFGSGQYTIQEGYAALKLAKAGFRTNNIDPNARHCMASAVVGFMQTFGVDEPSGCYDDIELTDTIITWGANMAEMHPILWSRVSDRKLSNLDKVKVVNLSTFSNRTSNIADIEIIFKPNTDLAIWNYIAREIVYNHPEAMDMKFIKDHCVFATGYADIGYGMRNNPNHPKFKESEKDTVEKENVITLDDEEATSLSYLGVKAGDKFEMKHQGVADKNWEISFDEFKKGLAPYTLEYTARVAKGDDNESLEDFKKKLQELANLYIEKNRKVVSFWTMGFNQHTRGSWVNEQAYMVHFLLGKQAKPGSGAFSLTGQPSACGTAREVGTFSHRLPADMVVANPKHREISEKIWKVPAKTINPKPGSPYLNIMRDLEDGKIKFAWVQVNNPWQNTANANHWIAAAREMDNFIVVSDCYPGISAKVADLILPSAMIYEKWGAYGNAERRTQHWKQQVLPVGAAMSDTWQILEFAKRFKLKEVWKEQKVDNKLTLPSVLEEAKAMGYSEDDTLFDVLFANKEAKSFNPNDAIAKGFDNTDVKGDERKIQGSDGKEFTGYGFFVQKYLWEEYRKFGLGHGHDLADFDTYHKVRGLRWPVVNGKETQWRFNTKFDYYAKKAAPNSDFAFYGDFNKMLTNGDLIAPKDEKEHSIKNKAKIFFRPFMKAPERPSKEYPFWLATGRVLEHWHSGTMTMRVPELYRAVPEALCYMSEKDGEKLGLNQGDLVWVESRRGKVKARVDMRGRNKPPVGLVYVPWFDENVYINKVTLDATCPLSKQTDFKKCAVKIYKA.

The segment at residues 1-30 (MNRRDFIKNTAIASAASVAGLSVPSSMLGA) is a signal peptide (tat-type signal). One can recognise a 4Fe-4S Mo/W bis-MGD-type domain in the interval 35-91 (WKWDKAVCRFCGTGCGIMIARKDGKIVATKGDPAAPVNRGLNCIKGYFNAKIMYGED). [4Fe-4S] cluster contacts are provided by Cys42, Cys45, Cys49, and Cys77. Residues Lys79, Gln147, Asn172, Cys176, 209 to 216 (WGANMAEM), Met417, Gln421, Asn527, 552 to 553 (SD), Lys575, Asp602, and 814 to 823 (TGRVLEHWHS) contribute to the Mo-bis(molybdopterin guanine dinucleotide) site. Trp890 is a binding site for substrate. Mo-bis(molybdopterin guanine dinucleotide) contacts are provided by Asn898 and Lys915.

It belongs to the prokaryotic molybdopterin-containing oxidoreductase family. NasA/NapA/NarB subfamily. As to quaternary structure, component of the periplasmic nitrate reductase NapAB complex composed of NapA and NapB. [4Fe-4S] cluster serves as cofactor. The cofactor is Mo-bis(molybdopterin guanine dinucleotide). Post-translationally, predicted to be exported by the Tat system. The position of the signal peptide cleavage has not been experimentally proven.

The protein localises to the periplasm. The enzyme catalyses 2 Fe(II)-[cytochrome] + nitrate + 2 H(+) = 2 Fe(III)-[cytochrome] + nitrite + H2O. Catalytic subunit of the periplasmic nitrate reductase complex NapAB. Receives electrons from NapB and catalyzes the reduction of nitrate to nitrite. The protein is Periplasmic nitrate reductase of Campylobacter jejuni subsp. jejuni serotype O:2 (strain ATCC 700819 / NCTC 11168).